Here is a 192-residue protein sequence, read N- to C-terminus: Probable thymidylate kinase (192 aa).

7 to 14 (GIDGAGKS) serves as a coordination point for ATP.

It belongs to the thymidylate kinase family.

The catalysed reaction is dTMP + ATP = dTDP + ADP. This chain is Probable thymidylate kinase, found in Methanobrevibacter smithii (strain ATCC 35061 / DSM 861 / OCM 144 / PS).